Here is a 336-residue protein sequence, read N- to C-terminus: Cinnamoyl-CoA reductase 2 (336 aa).

NADP(+) is bound by residues Gly-21–Ala-27, Arg-46, Lys-52, Asp-72–Leu-73, Thr-92–Ser-94, Tyr-165, Lys-169, Pro-192–Val-195, and Ser-207. A disulfide bridge links Cys-158 with Cys-166. Lys-169 functions as the Proton donor in the catalytic mechanism.

Belongs to the NAD(P)-dependent epimerase/dehydratase family. Dihydroflavonol-4-reductase subfamily. The formation of a reversible disulfide bond reduces activity by perturbing the positioning of nearby catalytic residues. Mainly expressed in roots and stems, especially at the second internode and, to a lower extent, in leaves and flowers. Localized in vascular elements, with weaker expression in the interfascicular (xylem fiber) region.

Its subcellular location is the cytoplasm. It catalyses the reaction (E)-coniferaldehyde + NADP(+) + CoA = (E)-feruloyl-CoA + NADPH + H(+). It carries out the reaction (E)-4-coumaraldehyde + NADP(+) + CoA = (E)-4-coumaroyl-CoA + NADPH + H(+). The catalysed reaction is (E)-sinapaldehyde + NADP(+) + CoA = (E)-sinapoyl-CoA + NADPH + H(+). The enzyme catalyses (E)-cinnamaldehyde + NADP(+) + CoA = (E)-cinnamoyl-CoA + NADPH + H(+). It catalyses the reaction (E)-caffeyl aldehyde + NADP(+) + CoA = (E)-caffeoyl-CoA + NADPH + H(+). It participates in aromatic compound metabolism; phenylpropanoid biosynthesis. Involved in the latter stages of lignin biosynthesis. Catalyzes one of the last steps of monolignol biosynthesis, the conversion of cinnamoyl-CoAs into their corresponding cinnamaldehydes. Mediates the conversion of caffeoyl-CoA and coumaroyl-CoA to caffaldehyde and coumaraldehyde, respectively. Also active, with a lower efficiency, toward feruloyl-CoA and sinapoyl-CoA. Involved in the production of floral volatile phenylpropanoids in flowers of fragrant cultivars from cinnamic acid, a common precursor with the anthocyanin biosynthesis pathway involved in flower pigmentation. The sequence is that of Cinnamoyl-CoA reductase 2 from Medicago truncatula (Barrel medic).